A 326-amino-acid chain; its full sequence is MKYKNILVTGSAGFIGFHLSKYLMDNYEDLKVIGIDNLNNYYNPVLKEKRNEILKNYENYTFIKLDFSDWDDLVENLKDKEIDLIVHLGAQAGVRYSLQNPWAYIKSNEMGTLNIFEFARRFDIEKVVYASSSSVYGGNRKIPFSEDDRVDKPISLYASTKRSNELMAHVYHHLYGIKMIGLRFFTVYGEYGRPDMAYFKFAKNILLGKEIEVYNYGNMERDFTYISDVVDGILRAIKKDFDYEIFNLGNSKPVKLMYFIELIEKYLNKKAKKKFLPMQDGDVLRTYADLSKSEKLLGYKPKVTIEEGLKRFCNWFLENKDWLLRL.

Ser132 is a binding site for substrate. Tyr157 functions as the Proton acceptor in the catalytic mechanism.

It belongs to the NAD(P)-dependent epimerase/dehydratase family. dTDP-glucose dehydratase subfamily.

This is an uncharacterized protein from Methanocaldococcus jannaschii (strain ATCC 43067 / DSM 2661 / JAL-1 / JCM 10045 / NBRC 100440) (Methanococcus jannaschii).